A 590-amino-acid polypeptide reads, in one-letter code: Muscarinic acetylcholine receptor M3 (590 aa).

The Extracellular segment spans residues 1–67; it reads MTLHNNNTTS…DPLGGHTIWQ (67 aa). 6 N-linked (GlcNAc...) asparagine glycosylation sites follow: N6, N7, N15, N41, N48, and N53. Residues 68–91 form a helical membrane-spanning segment; it reads VVFIAFLTGILALVTIIGNILVIV. At 92–104 the chain is on the cytoplasmic side; the sequence is AFKVNKQLKTVNN. The chain crosses the membrane as a helical span at residues 105–130; sequence YFLLSLACADLIIGVISMNLFTTYII. The Extracellular portion of the chain corresponds to 131–142; it reads MNRWALGNLACD. Residues C141 and C221 are joined by a disulfide bond. A helical transmembrane segment spans residues 143 to 164; the sequence is LWLSIDYVASNASVMNLLVISF. The Cytoplasmic segment spans residues 165–184; that stretch reads DRYFSITRPLTYRAKRTTKR. The helical transmembrane segment at 185–206 threads the bilayer; the sequence is AGVMIGLAWVISFILWAPAILF. Topologically, residues 207-229 are extracellular; it reads WQYFVGKRTVPPGECFIQFLSEP. Residues 230–252 traverse the membrane as a helical segment; it reads TITFGTAIAAFYMPVTIMTILYW. Topologically, residues 253 to 491 are cytoplasmic; sequence RIYKETEKRT…SLIKEKKAAQ (239 aa). Residues 275–281 carry the Basolateral sorting signal motif; it reads AEAENFV. The disordered stretch occupies residues 324–357; it reads AEQMDQDHSSSDSWNNNDAAASLENSASSDEEDI. The segment covering 334–345 has biased composition (low complexity); the sequence is SDSWNNNDAAAS. A Phosphoserine modification is found at S385. Residues 492–514 traverse the membrane as a helical segment; that stretch reads TLSAILLAFIITWTPYNIMVLVN. Over 515–526 the chain is Extracellular; sequence TFCDSCIPKTYW. C517 and C520 form a disulfide bridge. A helical membrane pass occupies residues 527–546; it reads NLGYWLCYINSTVNPVCYAL. Residues 547–590 lie on the Cytoplasmic side of the membrane; the sequence is CNKTFRTTFKMLLLCQCDKRKRRKQQYQQRQSVIFHKRVPEQAL.

Belongs to the G-protein coupled receptor 1 family. Muscarinic acetylcholine receptor subfamily. CHRM3 sub-subfamily. Homodimer; the dimers can form tetramers. Interacts with NALCN. Interacts with TMEM147.

The protein localises to the cell membrane. The protein resides in the postsynaptic cell membrane. Its subcellular location is the basolateral cell membrane. It localises to the endoplasmic reticulum membrane. Its function is as follows. The muscarinic acetylcholine receptor mediates various cellular responses, including inhibition of adenylate cyclase, breakdown of phosphoinositides and modulation of potassium channels through the action of G proteins. Primary transducing effect is Pi turnover. The sequence is that of Muscarinic acetylcholine receptor M3 (CHRM3) from Sus scrofa (Pig).